Consider the following 917-residue polypeptide: Catenin alpha (917 aa).

Residues T643 and T645 each carry the phosphothreonine modification. A phosphoserine mark is found at S659 and S662. The segment covering 878–890 (PLVRPEKPEEVRA) has biased composition (basic and acidic residues). The tract at residues 878–905 (PLVRPEKPEEVRAKVRKGSQKKVQNPIH) is disordered.

This sequence belongs to the vinculin/alpha-catenin family. As to quaternary structure, interacts with arm/armadillo protein. In terms of processing, rapidly phosphorylated by CK2 and more slowly by CK1.

The protein localises to the cytoplasm. The protein resides in the cytoskeleton. Its subcellular location is the cell junction. It is found in the adherens junction. It localises to the cell membrane. Associates with the cytoplasmic domain of a variety of cadherins. The association of catenins to cadherins produces a complex which is linked to the actin filament network, and which seems to be of primary importance for cadherins cell-adhesion properties. This chain is Catenin alpha, found in Drosophila melanogaster (Fruit fly).